A 162-amino-acid chain; its full sequence is Corticoliberin-2 (162 aa).

Positions 1 to 24 (MRLNFLVTTMALLVAFPPPYECRA) are cleaved as a signal peptide. Residues 25 to 119 (IDSSSNQPVT…ALDSEERERR (95 aa)) constitute a propeptide that is removed on maturation. The tract at residues 57–79 (LGNRNKNSPRSPPDTYPEASQYS) is disordered. Phenylalanine amide is present on phenylalanine 160.

It belongs to the sauvagine/corticotropin-releasing factor/urotensin I family.

The protein resides in the secreted. Functionally, this hormone from hypothalamus regulates the release of corticotropin from pituitary gland. The polypeptide is Corticoliberin-2 (crf2) (Catostomus commersonii (White sucker)).